Consider the following 253-residue polypeptide: uncharacterized protein (253 aa).

Positions 17, 36, 62, 89, 123, 158, 162, 191, and 193 each coordinate NADP(+). Residue Tyr-158 is the Proton acceptor of the active site. The Lowers pKa of active site Tyr role is filled by Lys-162.

The protein belongs to the short-chain dehydrogenases/reductases (SDR) family.

Its subcellular location is the cytoplasm. It is found in the nucleus. This is an uncharacterized protein from Schizosaccharomyces pombe (strain 972 / ATCC 24843) (Fission yeast).